Here is a 347-residue protein sequence, read N- to C-terminus: Tsukushi (347 aa).

Positions 1 to 19 are cleaved as a signal peptide; the sequence is MASLLCLFFSLLGLAAIGA. The LRRNT domain maps to 20–61; the sequence is VKNCHPQCRCEVETFGLFDSFSLTKVDCSRIGPGNTPVPIPL. LRR repeat units lie at residues 62–83, 88–109, 112–133, 135–156, 160–175, 185–205, 206–227, 230–252, 255–277, and 280–301; these read DTSH…MLSG, TLVS…AFSK, YLET…CFTG, PLVE…LFTT, DLPI…LTSI, YIKS…LNGI, PLQY…AFDS, ELVH…AFRS, NLQA…VFSG, and SLQE…VFMQ. Asparagine 285 carries N-linked (GlcNAc...) asparagine glycosylation.

In terms of assembly, forms a ternary complex with chordin/CHRD and BMP4.

It localises to the secreted. Its function is as follows. Contributes to various developmental events through its interactions with multiple signaling pathways. Dorsalizing factor which functions as an inhibitor of bone morphogenetic proteins during gastrulation. The sequence is that of Tsukushi (tsku) from Danio rerio (Zebrafish).